A 353-amino-acid chain; its full sequence is Putrescine N-methyltransferase 2 (353 aa).

The segment at 15-50 (KSGAIPMNGHHNGTSKHQNGHKNGTSEQQNGTISLD) is disordered. The segment covering 25 to 50 (HNGTSKHQNGHKNGTSEQQNGTISLD) has biased composition (polar residues). The 238-residue stretch at 64–301 (PGWFSEFSAL…GVIGYMLCST (238 aa)) folds into the PABS domain. S-adenosyl-L-methionine contacts are provided by residues glutamine 95, glutamate 170, and 201 to 202 (DG). Aspartate 220 acts as the Proton acceptor in catalysis. Position 289 (tyrosine 289) interacts with S-adenosyl-L-methionine.

This sequence belongs to the class I-like SAM-binding methyltransferase superfamily. Putrescine methyltransferase family. Predominantly expressed in roots.

It carries out the reaction putrescine + S-adenosyl-L-methionine = N-methylputrescine + S-adenosyl-L-homocysteine + H(+). It participates in alkaloid biosynthesis; nicotine biosynthesis. In terms of biological role, involved in the biosynthesis of pyridine alkaloid natural products, leading mainly to the production of anabasine, anatabine, nicotine and nornicotine, effective deterrents against herbivores with antiparasitic and pesticide properties (neurotoxins); nornicotine serves as the precursor in the synthesis of the carcinogen compound N'-nitrosonornicotine (NNN). Methyltransferase that mediates the conversion of putrescine to N-methylputrescine. Promotes leaves ripening. The polypeptide is Putrescine N-methyltransferase 2 (Nicotiana tabacum (Common tobacco)).